A 119-amino-acid chain; its full sequence is Ribonuclease P protein component (119 aa).

This sequence belongs to the RnpA family. Consists of a catalytic RNA component (M1 or rnpB) and a protein subunit.

It catalyses the reaction Endonucleolytic cleavage of RNA, removing 5'-extranucleotides from tRNA precursor.. Functionally, RNaseP catalyzes the removal of the 5'-leader sequence from pre-tRNA to produce the mature 5'-terminus. It can also cleave other RNA substrates such as 4.5S RNA. The protein component plays an auxiliary but essential role in vivo by binding to the 5'-leader sequence and broadening the substrate specificity of the ribozyme. The sequence is that of Ribonuclease P protein component from Escherichia fergusonii (strain ATCC 35469 / DSM 13698 / CCUG 18766 / IAM 14443 / JCM 21226 / LMG 7866 / NBRC 102419 / NCTC 12128 / CDC 0568-73).